We begin with the raw amino-acid sequence, 398 residues long: tRNA (guanine-N(7)-)-methyltransferase (398 aa).

Positions 124, 149, and 176 each coordinate S-adenosyl-L-methionine. Aspartate 232 contributes to the substrate binding site.

The protein belongs to the class I-like SAM-binding methyltransferase superfamily. TrmB family.

It catalyses the reaction guanosine(46) in tRNA + S-adenosyl-L-methionine = N(7)-methylguanosine(46) in tRNA + S-adenosyl-L-homocysteine. It functions in the pathway tRNA modification; N(7)-methylguanine-tRNA biosynthesis. Its function is as follows. Catalyzes the formation of N(7)-methylguanine at position 46 (m7G46) in tRNA. The protein is tRNA (guanine-N(7)-)-methyltransferase of Helicobacter acinonychis (strain Sheeba).